The sequence spans 160 residues: Ribosomal RNA large subunit methyltransferase H (160 aa).

S-adenosyl-L-methionine-binding residues include Leu-76 and Gly-108.

This sequence belongs to the RNA methyltransferase RlmH family. Homodimer.

It is found in the cytoplasm. It catalyses the reaction pseudouridine(1915) in 23S rRNA + S-adenosyl-L-methionine = N(3)-methylpseudouridine(1915) in 23S rRNA + S-adenosyl-L-homocysteine + H(+). Functionally, specifically methylates the pseudouridine at position 1915 (m3Psi1915) in 23S rRNA. In Rhodopseudomonas palustris (strain TIE-1), this protein is Ribosomal RNA large subunit methyltransferase H.